The chain runs to 1065 residues: DNA ligase 4 (1065 aa).

Residues 1 to 20 (MAVHAPYNHAPPPTQEINGQ) form a disordered region. Glu295, Lys297, Leu298, Arg302, Glu357, Phe387, Glu452, Lys457, Lys474, and Lys476 together coordinate ATP. Residue Lys297 is the N6-AMP-lysine intermediate of the active site. Mg(2+) is bound at residue Glu357. Mg(2+) is bound at residue Glu452. Positions 696-775 (VETSIFSDMT…TALPFLKEFL (80 aa)) constitute a BRCT 1 domain. The segment at 825 to 928 (GEDKDEIDVE…SDVGVNGDDY (104 aa)) is disordered. 2 stretches are compositionally biased toward basic and acidic residues: residues 834-864 (EESR…KKLQ) and 886-900 (MSLK…ERSR). In terms of domain architecture, BRCT 2 spans 954–1064 (DEDRIFYHLA…TLLDEDLYKP (111 aa)).

This sequence belongs to the ATP-dependent DNA ligase family. It depends on Mg(2+) as a cofactor.

It localises to the nucleus. The catalysed reaction is ATP + (deoxyribonucleotide)n-3'-hydroxyl + 5'-phospho-(deoxyribonucleotide)m = (deoxyribonucleotide)n+m + AMP + diphosphate.. DNA ligase involved in DNA non-homologous end joining (NHEJ); required for double-strand break (DSB) repair. This is DNA ligase 4 (LIG4) from Cryptococcus neoformans var. neoformans serotype D (strain B-3501A) (Filobasidiella neoformans).